A 1336-amino-acid chain; its full sequence is Vascular endothelial growth factor receptor 1 (1336 aa).

Residues 1 to 22 form the signal peptide; that stretch reads MVSCWDTAVLPCALLGCLLLTG. The Extracellular segment spans residues 23 to 758; sequence YCSGSKLKGP…QGTSDKSNLE (736 aa). 7 Ig-like C2-type domains span residues 32 to 121, 151 to 214, 230 to 327, 335 to 421, 429 to 549, 556 to 655, and 661 to 747; these read PELS…KKME, GREL…VNGH, LDVQ…TSVH, SVKH…LTAT, QIYE…RDIR, PNGF…EVLV, and PLLL…AYLT. 2 disulfide bridges follow: Cys-53–Cys-107 and Cys-158–Cys-207. N-linked (GlcNAc...) asparagine glycosylation is found at Asn-100, Asn-164, Asn-196, and Asn-251. Cys-252 and Cys-311 form a disulfide bridge. Asn-323, Asn-417, Asn-474, Asn-516, Asn-597, Asn-625, Asn-666, and Asn-713 each carry an N-linked (GlcNAc...) asparagine glycan. Disulfide bonds link Cys-454-Cys-535 and Cys-577-Cys-636. Cysteines 682 and 731 form a disulfide. A helical membrane pass occupies residues 759–780; it reads LITLTCTCVAATLFWLLLTLFI. Residues 781–1336 are Cytoplasmic-facing; it reads RKLKRSSSEV…SVVLYSSPPA (556 aa). Residues 827 to 1158 enclose the Protein kinase domain; sequence LKLGKSLGRG…ELVEKLGDLL (332 aa). ATP-binding positions include 833 to 841 and Lys-861; that span reads LGRGAFGKV. Phosphotyrosine; by autocatalysis is present on Tyr-914. Positions 941–957 are enriched in basic and acidic residues; that stretch reads KKEKLEPDLEQDQKPRL. Residues 941-982 form a disordered region; sequence KKEKLEPDLEQDQKPRLDSVSSSESFTSSGFQEDKSVSDVEG. Residues 959 to 969 are compositionally biased toward low complexity; that stretch reads SVSSSESFTSS. The active-site Proton acceptor is Asp-1022. A phosphotyrosine; by autocatalysis mark is found at Tyr-1053, Tyr-1169, Tyr-1213, Tyr-1242, Tyr-1325, and Tyr-1331. The segment at 1304-1326 is disordered; it reads RQEDEDDPELGKESCCSPPPDYN.

The protein belongs to the protein kinase superfamily. Tyr protein kinase family. CSF-1/PDGF receptor subfamily. As to quaternary structure, interacts with VEGFA, VEGFB and PGF. Monomer in the absence of bound VEGFA, VEGFB or PGF. Homodimer in the presence of bound VEGFA, VEGFB and PGF. Can also form a heterodimer with KDR. Interacts (tyrosine phosphorylated) with CBL, CRK, GRB2, NCK1, PIK3R1, PLCG, PSEN1 and PTPN11. Probably interacts with PTPRB. Interacts with RACK1. Identified in a complex with CBL and CD2AP. N-glycosylated. Post-translationally, ubiquitinated after VEGFA-mediated autophosphorylation, leading to proteolytic degradation. In terms of processing, autophosphorylated on tyrosine residues upon ligand binding. Autophosphorylation occurs in trans, i.e. one subunit of the dimeric receptor phosphorylates tyrosine residues on the other subunit. Phosphorylation at Tyr-1169 is important for interaction with PLCG. Phosphorylation at Tyr-1213 is important for interaction with PIK3R1, PTPN11, GRB2, and PLCG. Phosphorylation at Tyr-1331 is important for endocytosis and for interaction with CBL, NCK1 and CRK. Is probably dephosphorylated by PTPRB.

The protein resides in the cell membrane. It is found in the endosome. The catalysed reaction is L-tyrosyl-[protein] + ATP = O-phospho-L-tyrosyl-[protein] + ADP + H(+). Present in an inactive conformation in the absence of bound ligand. Binding of VEGFA, VEGFB or PGF leads to dimerization and activation by autophosphorylation on tyrosine residues. In terms of biological role, tyrosine-protein kinase that acts as a cell-surface receptor for VEGFA, VEGFB and PGF, and plays an essential role in the development of embryonic vasculature, the regulation of angiogenesis, cell survival, cell migration, macrophage function, chemotaxis, and cancer cell invasion. Acts as a positive regulator of postnatal retinal hyaloid vessel regression. May play an essential role as a negative regulator of embryonic angiogenesis by inhibiting excessive proliferation of endothelial cells. Can promote endothelial cell proliferation, survival and angiogenesis in adulthood. Its function in promoting cell proliferation seems to be cell-type specific. Promotes PGF-mediated proliferation of endothelial cells, and proliferation of some types of cancer cells, but does not promote proliferation of normal fibroblasts. Has very high affinity for VEGFA and relatively low protein kinase activity; may function as a negative regulator of VEGFA signaling by limiting the amount of free VEGFA and preventing its binding to KDR. Modulates KDR signaling by forming heterodimers with KDR. Ligand binding leads to the activation of several signaling cascades. Activation of PLCG leads to the production of the cellular signaling molecules diacylglycerol and inositol 1,4,5-trisphosphate and the activation of protein kinase C. Mediates phosphorylation of PIK3R1, the regulatory subunit of phosphatidylinositol 3-kinase, leading to the activation of phosphatidylinositol kinase and the downstream signaling pathway. Mediates activation of MAPK1/ERK2, MAPK3/ERK1 and the MAP kinase signaling pathway, as well as of the AKT1 signaling pathway. Phosphorylates SRC, YES1 and PLCG, and may also phosphorylate CBL. Promotes phosphorylation of AKT1 and PTK2/FAK1. This is Vascular endothelial growth factor receptor 1 (Flt1) from Rattus norvegicus (Rat).